Reading from the N-terminus, the 637-residue chain is Chaperone protein DnaK (637 aa).

Threonine 203 carries the phosphothreonine; by autocatalysis modification. The segment at 600–637 (SAVYGQQQEQGAPAQEEPSAEGKKNDDEGTVEGEFREV) is disordered. Low complexity predominate over residues 604-616 (GQQQEQGAPAQEE). Over residues 619–637 (AEGKKNDDEGTVEGEFREV) the composition is skewed to basic and acidic residues.

This sequence belongs to the heat shock protein 70 family.

Acts as a chaperone. In Dehalococcoides mccartyi (strain ATCC BAA-2266 / KCTC 15142 / 195) (Dehalococcoides ethenogenes (strain 195)), this protein is Chaperone protein DnaK.